A 499-amino-acid polypeptide reads, in one-letter code: L-asparagine permease (499 aa).

A run of 12 helical transmembrane segments spans residues 34–54 (QVQMIAIGGAIGTGLFLGAGA), 58–78 (MAGPALALVYLICGLFSFFIL), 109–129 (VAGWMYFINWAMTGIVDITAV), 146–166 (VFALAALTIVGTMNMIGVKWF), 171–191 (FWFALIKVLAIVTFLVVGTVF), 219–239 (LLPALVLIQGVVFAFASIEMV), 264–284 (IGLFYVGSVVLLVMLLPWSAY), 298–318 (LGVPYIGSIMNIVVLTAALSS), 353–373 (YAGILATLVVYVVGVFLNYLV), 378–398 (FEIVLNFASLGIIASWAFIIV), 422–442 (APFTSWLTLLFLLSVLVLMAF), and 448–468 (TYTIAALPIIGILLVIGWFGV).

The protein belongs to the amino acid-polyamine-organocation (APC) superfamily. Amino acid transporter (AAT) (TC 2.A.3.1) family.

The protein localises to the cell inner membrane. This is L-asparagine permease (ansP) from Escherichia coli (strain K12).